Reading from the N-terminus, the 137-residue chain is Holo-[acyl-carrier-protein] synthase (137 aa).

Residues Asp8 and Glu57 each contribute to the Mg(2+) site.

This sequence belongs to the P-Pant transferase superfamily. AcpS family. It depends on Mg(2+) as a cofactor.

It localises to the cytoplasm. It catalyses the reaction apo-[ACP] + CoA = holo-[ACP] + adenosine 3',5'-bisphosphate + H(+). Transfers the 4'-phosphopantetheine moiety from coenzyme A to a Ser of acyl-carrier-protein. The chain is Holo-[acyl-carrier-protein] synthase from Mesorhizobium japonicum (strain LMG 29417 / CECT 9101 / MAFF 303099) (Mesorhizobium loti (strain MAFF 303099)).